We begin with the raw amino-acid sequence, 263 residues long: Hydroxyacylglutathione hydrolase (263 aa).

Zn(2+)-binding residues include His-56, His-58, Asp-60, His-61, His-115, Asp-135, and His-175.

The protein belongs to the metallo-beta-lactamase superfamily. Glyoxalase II family. As to quaternary structure, monomer. Requires Zn(2+) as cofactor.

It catalyses the reaction an S-(2-hydroxyacyl)glutathione + H2O = a 2-hydroxy carboxylate + glutathione + H(+). It participates in secondary metabolite metabolism; methylglyoxal degradation; (R)-lactate from methylglyoxal: step 2/2. Functionally, thiolesterase that catalyzes the hydrolysis of S-D-lactoyl-glutathione to form glutathione and D-lactic acid. In Polaromonas sp. (strain JS666 / ATCC BAA-500), this protein is Hydroxyacylglutathione hydrolase.